Here is a 575-residue protein sequence, read N- to C-terminus: Lysine--tRNA ligase (575 aa).

2 residues coordinate Mg(2+): glutamate 412 and glutamate 419.

It belongs to the class-II aminoacyl-tRNA synthetase family. As to quaternary structure, homodimer. Mg(2+) serves as cofactor.

The protein localises to the cytoplasm. The catalysed reaction is tRNA(Lys) + L-lysine + ATP = L-lysyl-tRNA(Lys) + AMP + diphosphate. The sequence is that of Lysine--tRNA ligase from Bacteroides fragilis (strain ATCC 25285 / DSM 2151 / CCUG 4856 / JCM 11019 / LMG 10263 / NCTC 9343 / Onslow / VPI 2553 / EN-2).